Here is an 860-residue protein sequence, read N- to C-terminus: MQEQYRPEEIESKVQLHWDEKRTFEVTEDESKEKYYCLSMLPYPSGRLHMGHVRNYTIGDVVARYQHMLGKNVLQPIGWDAFGLPAEGAAVKNNTAPAPWTYDNIAYMKNQLKTLGFGYDWSREIATCTPEYYRWEQKFFTELYKKGLVYKKTSAVNWCPNDQTVLANEQVIDGCCWRCDTKVERKEIPQWFIKITAYADELLRDLDKLDHWPDTVKTMQRNWIGRSEGVEITFDVKGYDNTLTVYTTRPDTFMGATYLAVAAGHPLAQKAAANNAELAAFIDECRNTKVAEAEMATMEKKGVDTGYKAIHPLTGEEIPVWAANFVLMEYGTGAVMAVPGHDQRDYEFASKYGLTIKPVILAADGSEPDLSEQALTEKGVLFNSGEFDGLAFEAAFNAIADKLAEKGVGERKVNYRLRDWGVSRQRYWGAPIPMVTLEDGTVLPTPEDQLPVILPEDVVMDGITSPIKADPEWAKTTVNGMPALRETDTFDTFMESSWYYARYTCPQYQEGMLDSKAANYWLPVDIYIGGIEHAIMHLLYFRFFHKLMRDAGMVTSDEPAKQLLCQGMVLADAFYYVGENGERNWVSPVDAIVERDEKGRIVKAKDAAGHELVYTGMSKMSKSKNNGIDPQVMVERYGADTVRLFMMFASPADMTLEWQESGVEGANRFIKRVWKLVYEHTAKGPVAALNVDALSEDQKALRRDVHKTIAKVTDDIGRRQTFNTAIAAIMELMNKLAKAPQEGEQDRALLQEALQAVVRMLNPFTPHVCFTLWQELGGEGDIDNAPWPVADEQAMVENTTLVVVQVNGKVRGKITVAVDATEEQVRERAGQEHLVAKYLDGVTVRKVIYVPGKLLNLVVG.

The 'HIGH' region signature appears at 42-52 (PYPSGRLHMGH). The 'KMSKS' region motif lies at 619-623 (KMSKS). Residue lysine 622 coordinates ATP.

Belongs to the class-I aminoacyl-tRNA synthetase family.

The protein resides in the cytoplasm. It carries out the reaction tRNA(Leu) + L-leucine + ATP = L-leucyl-tRNA(Leu) + AMP + diphosphate. In Salmonella typhi, this protein is Leucine--tRNA ligase.